A 393-amino-acid polypeptide reads, in one-letter code: Acetate kinase (393 aa).

Asparagine 10 serves as a coordination point for Mg(2+). Residue lysine 17 coordinates ATP. Arginine 89 is a substrate binding site. Catalysis depends on aspartate 146, which acts as the Proton donor/acceptor. ATP is bound by residues 204–208 (HLGNG), 278–280 (DMR), and 323–327 (GVGEN). Glutamate 376 lines the Mg(2+) pocket.

Belongs to the acetokinase family. In terms of assembly, homodimer. Requires Mg(2+) as cofactor. Mn(2+) is required as a cofactor.

It is found in the cytoplasm. The enzyme catalyses acetate + ATP = acetyl phosphate + ADP. It participates in metabolic intermediate biosynthesis; acetyl-CoA biosynthesis; acetyl-CoA from acetate: step 1/2. Catalyzes the formation of acetyl phosphate from acetate and ATP. Can also catalyze the reverse reaction. The protein is Acetate kinase of Mycoplasma genitalium (strain ATCC 33530 / DSM 19775 / NCTC 10195 / G37) (Mycoplasmoides genitalium).